The sequence spans 483 residues: 6-phosphogluconate dehydrogenase, decarboxylating (483 aa).

NADP(+) is bound by residues G10–G15 and N33–T35. K38 is modified (N6-acetyllysine). Residue S57 is modified to Phosphoserine. Residue K59 is modified to N6-acetyllysine. NADP(+) contacts are provided by residues V75–A77 and N103. Substrate is bound by residues N103 and S129–G131. S129 bears the Phosphoserine mark. The active-site Proton acceptor is the K184. Substrate is bound at residue H187–N188. Catalysis depends on E191, which acts as the Proton donor. Positions 192, 261, and 288 each coordinate substrate. Position 309 is an N6-acetyllysine (K309). Substrate contacts are provided by R447 and H453. Residue S478–Y481 coordinates NADP(+).

This sequence belongs to the 6-phosphogluconate dehydrogenase family. Homodimer.

Its subcellular location is the cytoplasm. The enzyme catalyses 6-phospho-D-gluconate + NADP(+) = D-ribulose 5-phosphate + CO2 + NADPH. Its pathway is carbohydrate degradation; pentose phosphate pathway; D-ribulose 5-phosphate from D-glucose 6-phosphate (oxidative stage): step 3/3. Functionally, catalyzes the oxidative decarboxylation of 6-phosphogluconate to ribulose 5-phosphate and CO(2), with concomitant reduction of NADP to NADPH. This chain is 6-phosphogluconate dehydrogenase, decarboxylating (PGD), found in Homo sapiens (Human).